Here is a 142-residue protein sequence, read N- to C-terminus: Large ribosomal subunit protein uL13 (142 aa).

It belongs to the universal ribosomal protein uL13 family. In terms of assembly, part of the 50S ribosomal subunit.

Its function is as follows. This protein is one of the early assembly proteins of the 50S ribosomal subunit, although it is not seen to bind rRNA by itself. It is important during the early stages of 50S assembly. This Acinetobacter baumannii (strain AB0057) protein is Large ribosomal subunit protein uL13.